The sequence spans 1007 residues: Zinc finger CCCH domain-containing protein 4 (1007 aa).

The Helicase ATP-binding domain maps to 28 to 192 (VEKVKGNRVT…FRDLGRGERV (165 aa)). Residue 41–48 (GDTGCGKS) participates in ATP binding. The DEAH box signature appears at 139-142 (DEIH). The region spanning 250 to 420 (LIHRLLLHIH…EQVLMICCAE (171 aa)) is the Helicase C-terminal domain. 2 consecutive C3H1-type zinc fingers follow at residues 723–750 (ALEN…HSSR) and 751–778 (APRP…HDSG).

The polypeptide is Zinc finger CCCH domain-containing protein 4 (Oryza sativa subsp. japonica (Rice)).